The primary structure comprises 737 residues: Palmitoyltransferase akr1 (737 aa).

A compositionally biased stretch (low complexity) spans 1 to 15; sequence MSSGNSSTGTHTNGN. The interval 1-39 is disordered; sequence MSSGNSSTGTHTNGNFATLGSSPPSAVGGKGRAIPPKVT. Over 1 to 313 the chain is Cytoplasmic; the sequence is MSSGNSSTGT…WVRNKSLMSK (313 aa). 5 ANK repeats span residues 96-125, 130-159, 163-192, 196-225, and 228-258; these read EGIT…DVNA, SVAT…DPLL, QGYN…PVDV, QGHT…HANA, and EGGL…DKFA. The next 2 membrane-spanning stretches (helical) occupy residues 314-334 and 335-355; these read FFFL…SNMV and VYAA…VAQK. Topologically, residues 356-374 are cytoplasmic; it reads AASQGPSEYRILQKTPYLS. The chain crosses the membrane as a helical span at residues 375-395; that stretch reads GVFAGSLFWVGFRYVFYVLPV. The Lumenal portion of the chain corresponds to 396–401; it reads TYSTSP. A helical transmembrane segment spans residues 402-422; sequence ILNGLFAIFFSLTTYFYIYSM. Topologically, residues 423-498 are cytoplasmic; sequence VEDPGFVPKL…DNCVGANNLR (76 aa). A DHHC domain is found at 455-505; the sequence is NFCVSCMVRRPLRSKHCKRCARCVAKHDHHCPWIDNCVGANNLRHFVLYIT. The active-site S-palmitoyl cysteine intermediate is the Cys485. A helical transmembrane segment spans residues 499-519; sequence HFVLYITCLEVGIVLFVQLTF. Residues 520–548 lie on the Lumenal side of the membrane; that stretch reads NYINSLPAPAQPQCNIINETLCDFVLRDT. The chain crosses the membrane as a helical span at residues 549–569; it reads FTLVLDLWVCIQLVWITMLVA. The Cytoplasmic portion of the chain corresponds to 570-737; it reads VQMIQISRNQ…LSVEDPEQGV (168 aa).

The protein belongs to the DHHC palmitoyltransferase family. AKR/ZDHHC17 subfamily.

Its subcellular location is the early endosome membrane. The protein localises to the golgi apparatus membrane. It catalyses the reaction L-cysteinyl-[protein] + hexadecanoyl-CoA = S-hexadecanoyl-L-cysteinyl-[protein] + CoA. In terms of biological role, palmitoyltransferase specific for casein kinase 1. This is Palmitoyltransferase akr1 (akr1) from Aspergillus oryzae (strain ATCC 42149 / RIB 40) (Yellow koji mold).